We begin with the raw amino-acid sequence, 314 residues long: Mitochondrial 2-oxoglutarate/malate carrier protein (314 aa).

N-acetylalanine is present on alanine 2. Residue serine 6 is modified to Phosphoserine. Solcar repeat units follow at residues 23-108 (VKFL…LFER), 117-208 (PGFL…SKQF), and 217-306 (DNIL…MNKA). The helical transmembrane segment at 24–42 (KFLFGGLAGMGATVFVQPL) threads the bilayer. Lysine 57 is modified (N6-succinyllysine). A helical membrane pass occupies residues 83 to 101 (GLSAGLLRQATYTTTRLGI). Residue tyrosine 102 is modified to Phosphotyrosine. The next 3 helical transmembrane spans lie at 119–140 (FLLK…GTPA), 183–202 (GCIP…LASY), and 222–240 (HFCA…SMPV). Lysine 256 carries the post-translational modification N6-acetyllysine. A helical membrane pass occupies residues 281–300 (GFTPYYARLGPHTVLTFIFL).

This sequence belongs to the mitochondrial carrier (TC 2.A.29) family. Interacts with SMIM26. The N-terminus is blocked. Heart, liver and brain.

It is found in the mitochondrion inner membrane. The catalysed reaction is (S)-malate(in) + 2-oxoglutarate(out) = (S)-malate(out) + 2-oxoglutarate(in). It catalyses the reaction malonate(in) + 2-oxoglutarate(out) = malonate(out) + 2-oxoglutarate(in). It carries out the reaction succinate(in) + 2-oxoglutarate(out) = succinate(out) + 2-oxoglutarate(in). The enzyme catalyses maleate(in) + 2-oxoglutarate(out) = maleate(out) + 2-oxoglutarate(in). The catalysed reaction is oxaloacetate(in) + 2-oxoglutarate(out) = oxaloacetate(out) + 2-oxoglutarate(in). Functionally, catalyzes the transport of 2-oxoglutarate (alpha-oxoglutarate) across the inner mitochondrial membrane in an electroneutral exchange for malate. Can also exchange 2-oxoglutarate for other dicarboxylic acids such as malonate, succinate, maleate and oxaloacetate, although with lower affinity. Contributes to several metabolic processes, including the malate-aspartate shuttle, the oxoglutarate/isocitrate shuttle, in gluconeogenesis from lactate, and in nitrogen metabolism. Maintains mitochondrial fusion and fission events, and the organization and morphology of cristae. Involved in the regulation of apoptosis. Helps protect from cytotoxic-induced apoptosis by modulating glutathione levels in mitochondria. The chain is Mitochondrial 2-oxoglutarate/malate carrier protein (SLC25A11) from Bos taurus (Bovine).